The chain runs to 412 residues: Nuclear hormone receptor family member nhr-61 (412 aa).

The span at 1–19 shows a compositional bias: low complexity; the sequence is MIVDSISSSTASTSSSSPT. The disordered stretch occupies residues 1–23; it reads MIVDSISSSTASTSSSSPTRGTP. Residues 27–102 constitute a DNA-binding region (nuclear receptor); the sequence is SLQCAVCGDV…VGMNPRAVQG (76 aa). 2 consecutive NR C4-type zinc fingers follow at residues 30-50 and 66-90; these read CAVCGDVALGKHYGVNACNGC and CRHGGKCLVAKEQRNACRSCRLTRC. Residues 144–407 form the NR LBD domain; sequence KKEQIIDNLR…DWSQELRDHR (264 aa).

Belongs to the nuclear hormone receptor family.

Its subcellular location is the nucleus. Its function is as follows. Orphan nuclear receptor. In Caenorhabditis elegans, this protein is Nuclear hormone receptor family member nhr-61 (nhr-61).